Consider the following 528-residue polypeptide: MSVVLEDAIRSNAWPFIEAKKILDSLNGKAPEKGYILFETGYGPSGLPHIGTFAENARMVMVQKAFEQLSDIPTKLICFSDDMDGLRKVPSNIPHPEMVAQYMDMPLTSIPDPFGKCKSYGHYMNAKLCAFLDKFGFKYEFYSSTNCYKAGMFDEMLIRVLEKYDEIMALMLPTFRDERKTTYAPFMPICPKTGKVLQVPIEKWDAKAGTVSYKDEDGNDVEVPVTGGHCKLQWKPDFGMRWAALKVDYEMYGKDHLANSRLYSEICRILGGKPPVQFCYELFLDANGEKISKSRGNSISVDDWLKYASVESIALFMYKNPARAKRLFFDLIPKNVDEYITLNQKYHLEEDMVTRFANPVYHIHHGNVPKIETFGLTYSLLLNLTAVCNTSDKSVLWGFITKYEPKATPNTSTYLDHLTEFAIRYYNDFIQTHKSYLVVSEKHKIILHDILDMLSNISDQTEEESIQKAIYDIGMKSGYENLRYYFKDLYQILLGQNEGPRLGTFIKLYGVEETKKLVEEKLLCHTVA.

Positions 44-52 (PSGLPHIGT) match the 'HIGH' region motif. A 'KMSKS' region motif is present at residues 290-294 (KISKS). K293 provides a ligand contact to ATP.

It belongs to the class-I aminoacyl-tRNA synthetase family.

The protein resides in the cytoplasm. The enzyme catalyses tRNA(Lys) + L-lysine + ATP = L-lysyl-tRNA(Lys) + AMP + diphosphate. This chain is Lysine--tRNA ligase (lysS), found in Rickettsia prowazekii (strain Madrid E).